A 651-amino-acid chain; its full sequence is DNA mismatch repair protein MutL (651 aa).

The interval 383 to 405 (TAAEEPTPAPTSPDLEIGDLDDQ) is disordered.

It belongs to the DNA mismatch repair MutL/HexB family.

Its function is as follows. This protein is involved in the repair of mismatches in DNA. It is required for dam-dependent methyl-directed DNA mismatch repair. May act as a 'molecular matchmaker', a protein that promotes the formation of a stable complex between two or more DNA-binding proteins in an ATP-dependent manner without itself being part of a final effector complex. This Lacticaseibacillus casei (strain BL23) (Lactobacillus casei) protein is DNA mismatch repair protein MutL.